We begin with the raw amino-acid sequence, 285 residues long: Biotin synthase (285 aa).

The Radical SAM core domain occupies 2-223 (STRKQIFLCA…RRAHTLLGED (222 aa)). [4Fe-4S] cluster is bound by residues C20, C24, and C27. Residues C64, C99, and C157 each coordinate [2Fe-2S] cluster.

The protein belongs to the radical SAM superfamily. Biotin synthase family. As to quaternary structure, homodimer. [4Fe-4S] cluster serves as cofactor. It depends on [2Fe-2S] cluster as a cofactor.

The catalysed reaction is (4R,5S)-dethiobiotin + (sulfur carrier)-SH + 2 reduced [2Fe-2S]-[ferredoxin] + 2 S-adenosyl-L-methionine = (sulfur carrier)-H + biotin + 2 5'-deoxyadenosine + 2 L-methionine + 2 oxidized [2Fe-2S]-[ferredoxin]. It participates in cofactor biosynthesis; biotin biosynthesis; biotin from 7,8-diaminononanoate: step 2/2. Functionally, catalyzes the conversion of dethiobiotin (DTB) to biotin by the insertion of a sulfur atom into dethiobiotin via a radical-based mechanism. The protein is Biotin synthase of Sulfurovum sp. (strain NBC37-1).